Here is a 424-residue protein sequence, read N- to C-terminus: Dihydrolipoyllysine-residue succinyltransferase component of 2-oxoglutarate dehydrogenase complex (424 aa).

In terms of domain architecture, Lipoyl-binding spans 1–76 (MPEVKVPELA…EVGQAIAVVG (76 aa)). At lysine 42 the chain carries N6-lipoyllysine. Disordered stretches follow at residues 76–138 (GEGS…KYAR) and 155–204 (VRKE…RKKT). Over residues 91-105 (EAPKQETETSTDDKS) the composition is skewed to basic and acidic residues. Residues 122 to 131 (DNNQRVNATP) are compositionally biased toward polar residues. The 37-residue stretch at 128 to 164 (NATPSARKYAREKGIDLSEIAAASNDVVRKEHVDQSQ) folds into the Peripheral subunit-binding (PSBD) domain. Residues 162–176 (QSQTQTSTQQQAQPA) show a composition bias toward low complexity. Active-site residues include histidine 395 and aspartate 399.

This sequence belongs to the 2-oxoacid dehydrogenase family. In terms of assembly, forms a 24-polypeptide structural core with octahedral symmetry. Part of the 2-oxoglutarate dehydrogenase (OGDH) complex composed of E1 (2-oxoglutarate dehydrogenase), E2 (dihydrolipoamide succinyltransferase) and E3 (dihydrolipoamide dehydrogenase); the complex contains multiple copies of the three enzymatic components (E1, E2 and E3). The cofactor is (R)-lipoate.

The catalysed reaction is N(6)-[(R)-dihydrolipoyl]-L-lysyl-[protein] + succinyl-CoA = N(6)-[(R)-S(8)-succinyldihydrolipoyl]-L-lysyl-[protein] + CoA. It participates in amino-acid degradation; L-lysine degradation via saccharopine pathway; glutaryl-CoA from L-lysine: step 6/6. Functionally, E2 component of the 2-oxoglutarate dehydrogenase (OGDH) complex which catalyzes the second step in the conversion of 2-oxoglutarate to succinyl-CoA and CO(2). The protein is Dihydrolipoyllysine-residue succinyltransferase component of 2-oxoglutarate dehydrogenase complex (odhB) of Staphylococcus saprophyticus subsp. saprophyticus (strain ATCC 15305 / DSM 20229 / NCIMB 8711 / NCTC 7292 / S-41).